The chain runs to 508 residues: DASH complex subunit ASK1 (508 aa).

Disordered regions lie at residues 86-138 (LVDG…TLSS) and 150-355 (SRAA…QLRS). The span at 116 to 138 (EPSQYTPRPQTSAGGHDTTTLSS) shows a compositional bias: polar residues. Positions 161-175 (QHHDDSSVLTDRDGD) are enriched in basic and acidic residues. The segment covering 201–213 (DEMDIDMDEEDSE) has biased composition (acidic residues). Residues 229 to 238 (RYYDDDHGFE) show a composition bias toward basic and acidic residues. Acidic residues predominate over residues 239-258 (QGEEEEDEEEEEEEEEEEEG). Residues 326-338 (IKQEDTEKKRPLW) are compositionally biased toward basic and acidic residues.

It belongs to the DASH complex ASK1 family. In terms of assembly, component of the DASH complex consisting of ASK1, DAD1, DAD2, DAD3, DAD4, DAM1, DUO1, HSK3, SPC19 and SPC34, with a stoichiometry of one copy of each subunit per complex. Multiple DASH complexes oligomerize to form a ring that encircles spindle microtubules and organizes the rod-like NDC80 complexes of the outer kinetochore. On cytoplasmic microtubules, DASH complexes appear to form patches instead of rings.

The protein localises to the chromosome. It is found in the centromere. Its subcellular location is the kinetochore. The protein resides in the cytoplasm. It localises to the cytoskeleton. The protein localises to the spindle. It is found in the nucleus. Component of the DASH complex that connects microtubules with kinetochores and couples microtubule depolymerisation to chromosome movement; it is involved in retrieving kinetochores to the spindle poles before their re-orientation on the spindle in early mitosis and allows microtubule depolymerization to pull chromosomes apart and resist detachment during anaphase. Kinetochores, consisting of a centromere-associated inner segment and a microtubule-contacting outer segment, play a crucial role in chromosome segregation by mediating the physical connection between centromeric DNA and microtubules. Kinetochores also serve as an input point for the spindle assembly checkpoint, which delays anaphase until all chromosomes have bioriented on the mitotic spindle. The chain is DASH complex subunit ASK1 from Chaetomium thermophilum (strain DSM 1495 / CBS 144.50 / IMI 039719) (Thermochaetoides thermophila).